We begin with the raw amino-acid sequence, 230 residues long: Demethylmenaquinone methyltransferase (230 aa).

S-adenosyl-L-methionine is bound by residues Thr-62, Asp-80, 100-101, and Ser-117; that span reads DG.

Belongs to the class I-like SAM-binding methyltransferase superfamily. MenG/UbiE family.

The enzyme catalyses a 2-demethylmenaquinol + S-adenosyl-L-methionine = a menaquinol + S-adenosyl-L-homocysteine + H(+). It participates in quinol/quinone metabolism; menaquinone biosynthesis; menaquinol from 1,4-dihydroxy-2-naphthoate: step 2/2. Methyltransferase required for the conversion of demethylmenaquinol (DMKH2) to menaquinol (MKH2). The sequence is that of Demethylmenaquinone methyltransferase from Corynebacterium glutamicum (strain R).